We begin with the raw amino-acid sequence, 136 residues long: Large ribosomal subunit protein uL16 (136 aa).

Belongs to the universal ribosomal protein uL16 family. As to quaternary structure, part of the 50S ribosomal subunit.

Binds 23S rRNA and is also seen to make contacts with the A and possibly P site tRNAs. The chain is Large ribosomal subunit protein uL16 from Rickettsia akari (strain Hartford).